The sequence spans 361 residues: Phenylalanine--tRNA ligase alpha subunit (361 aa).

Glu260 provides a ligand contact to Mg(2+).

The protein belongs to the class-II aminoacyl-tRNA synthetase family. Phe-tRNA synthetase alpha subunit type 1 subfamily. Tetramer of two alpha and two beta subunits. Requires Mg(2+) as cofactor.

The protein localises to the cytoplasm. The enzyme catalyses tRNA(Phe) + L-phenylalanine + ATP = L-phenylalanyl-tRNA(Phe) + AMP + diphosphate + H(+). The sequence is that of Phenylalanine--tRNA ligase alpha subunit from Bartonella henselae (strain ATCC 49882 / DSM 28221 / CCUG 30454 / Houston 1) (Rochalimaea henselae).